Consider the following 301-residue polypeptide: Pantothenate synthetase (301 aa).

ATP is bound at residue 30-37; that stretch reads MGNLHEGH. H37 (proton donor) is an active-site residue. Q61 serves as a coordination point for (R)-pantoate. Q61 contributes to the beta-alanine binding site. An ATP-binding site is contributed by 149 to 152; that stretch reads GEKD. Position 155 (Q155) interacts with (R)-pantoate. ATP-binding positions include V178 and 186–189; that span reads MSSR.

The protein belongs to the pantothenate synthetase family. In terms of assembly, homodimer.

The protein localises to the cytoplasm. The catalysed reaction is (R)-pantoate + beta-alanine + ATP = (R)-pantothenate + AMP + diphosphate + H(+). Its pathway is cofactor biosynthesis; (R)-pantothenate biosynthesis; (R)-pantothenate from (R)-pantoate and beta-alanine: step 1/1. In terms of biological role, catalyzes the condensation of pantoate with beta-alanine in an ATP-dependent reaction via a pantoyl-adenylate intermediate. The polypeptide is Pantothenate synthetase (Vibrio parahaemolyticus serotype O3:K6 (strain RIMD 2210633)).